The primary structure comprises 574 residues: MGKSRQNSTTTVDREKDEIQKAMGHEKAEFEALEVARHGGREIDDLIDDMERQLDEAGGLNKGFFQVQFANPKHFTWLLVAFASMGGLLSGLDQSLISGANLFLPDDLGLTEHENSLVNSGMPLGAVGGALLLSPANEYFGRKGAIIISIILYTIGAALEAGSINFGMIVSSRVILGLGVGLEGGTVPVYVAETVERRIRGNLVSLYQFNIALGEVLGYAVGAIFLNVPGNWRYILGSSLLFSTIMFFGMLFLPESPRFLIHQKRHLDAYKVWKRIRGIEDRESREEFYVMSASVVSEENAVAEGAKNHRFPWMDFFTEPRARRALVYANIMILLGQLTGVNAIMYYMSVLMNQIGFDKKESNYMSLVGGGSLLLGTIPAIFLMERFGRRFWAITMLPGFFIGLVLIGVSYQFDVETQLQTVEGLYLSGLIIYMGFFGSYACLTWVVPSEVYPTYLRSYGMTTSDALLFLASFIVTYNFTAMQNAMGKTGLALGFYGGIAFIGEIYQIFFMPETKNKTLEEIDVVFSRPTMDIVRENWAGVKETTHLLLTGHWHKVFVEQAMTDPKDQVQVSHA.

Over 1 to 76 (MGKSRQNSTT…VQFANPKHFT (76 aa)) the chain is Cytoplasmic. A helical membrane pass occupies residues 77 to 97 (WLLVAFASMGGLLSGLDQSLI). Residues 98-115 (SGANLFLPDDLGLTEHEN) lie on the Extracellular side of the membrane. A helical membrane pass occupies residues 116–136 (SLVNSGMPLGAVGGALLLSPA). Residues 137–143 (NEYFGRK) are Cytoplasmic-facing. A helical membrane pass occupies residues 144-164 (GAIIISIILYTIGAALEAGSI). Residues 165-173 (NFGMIVSSR) are Extracellular-facing. A helical membrane pass occupies residues 174–194 (VILGLGVGLEGGTVPVYVAET). The Cytoplasmic portion of the chain corresponds to 195–205 (VERRIRGNLVS). A helical transmembrane segment spans residues 206-226 (LYQFNIALGEVLGYAVGAIFL). At 227-233 (NVPGNWR) the chain is on the extracellular side. Residues 234-254 (YILGSSLLFSTIMFFGMLFLP) form a helical membrane-spanning segment. At 255–330 (ESPRFLIHQK…RARRALVYAN (76 aa)) the chain is on the cytoplasmic side. A helical membrane pass occupies residues 331 to 351 (IMILLGQLTGVNAIMYYMSVL). At 352–363 (MNQIGFDKKESN) the chain is on the extracellular side. The helical transmembrane segment at 364-384 (YMSLVGGGSLLLGTIPAIFLM) threads the bilayer. At 385–390 (ERFGRR) the chain is on the cytoplasmic side. Residues 391–411 (FWAITMLPGFFIGLVLIGVSY) traverse the membrane as a helical segment. The Extracellular portion of the chain corresponds to 412-426 (QFDVETQLQTVEGLY). Residues 427 to 447 (LSGLIIYMGFFGSYACLTWVV) traverse the membrane as a helical segment. Over 448 to 465 (PSEVYPTYLRSYGMTTSD) the chain is Cytoplasmic. The chain crosses the membrane as a helical span at residues 466–486 (ALLFLASFIVTYNFTAMQNAM). Residues 487-490 (GKTG) lie on the Extracellular side of the membrane. The helical transmembrane segment at 491–511 (LALGFYGGIAFIGEIYQIFFM) threads the bilayer. The Cytoplasmic portion of the chain corresponds to 512 to 574 (PETKNKTLEE…PKDQVQVSHA (63 aa)).

It belongs to the major facilitator superfamily. Sugar transporter (TC 2.A.1.1) family.

Its subcellular location is the cell membrane. It catalyses the reaction myo-inositol(out) + H(+)(out) = myo-inositol(in) + H(+)(in). Functionally, transporter for myo-inositol. Also appears to transport the polyketide mycotoxin fumonisin B1 (FB1). Does not appear to transport hexose sugars. This Gibberella moniliformis (strain M3125 / FGSC 7600) (Maize ear and stalk rot fungus) protein is Myo-inositol transporter FST1.